The sequence spans 631 residues: Chaperone protein DnaK (631 aa).

Thr175 carries the post-translational modification Phosphothreonine; by autocatalysis. The tract at residues 586–631 is disordered; sequence GAEGAAAGAGAAGAAGAGASAGSASGSDDDTVEAEVVDDDDDKDNK. Over residues 602-611 the composition is skewed to low complexity; it reads AGASAGSASG. Positions 612 to 631 are enriched in acidic residues; sequence SDDDTVEAEVVDDDDDKDNK.

This sequence belongs to the heat shock protein 70 family.

Acts as a chaperone. This Bifidobacterium longum subsp. infantis (strain ATCC 15697 / DSM 20088 / JCM 1222 / NCTC 11817 / S12) protein is Chaperone protein DnaK.